The primary structure comprises 431 residues: L-cysteine:1D-myo-inositol 2-amino-2-deoxy-alpha-D-glucopyranoside ligase (431 aa).

Residue Cys44 participates in Zn(2+) binding. L-cysteinyl-5'-AMP is bound by residues 44-47 (CGIT), Thr59, and 82-84 (NVT). Positions 46-56 (ITPYDATHLGH) match the 'HIGH' region motif. Residues 187–192 (ERGGDP) carry the 'ERGGDP' region motif. An L-cysteinyl-5'-AMP-binding site is contributed by Trp227. Cys231 contributes to the Zn(2+) binding site. 249 to 251 (GND) contributes to the L-cysteinyl-5'-AMP binding site. His256 provides a ligand contact to Zn(2+). Residue Ile283 participates in L-cysteinyl-5'-AMP binding. The short motif at 289–293 (KMSKS) is the 'KMSKS' region element.

The protein belongs to the class-I aminoacyl-tRNA synthetase family. MshC subfamily. As to quaternary structure, monomer. Requires Zn(2+) as cofactor.

It catalyses the reaction 1D-myo-inositol 2-amino-2-deoxy-alpha-D-glucopyranoside + L-cysteine + ATP = 1D-myo-inositol 2-(L-cysteinylamino)-2-deoxy-alpha-D-glucopyranoside + AMP + diphosphate + H(+). Catalyzes the ATP-dependent condensation of GlcN-Ins and L-cysteine to form L-Cys-GlcN-Ins. The polypeptide is L-cysteine:1D-myo-inositol 2-amino-2-deoxy-alpha-D-glucopyranoside ligase (Stackebrandtia nassauensis (strain DSM 44728 / CIP 108903 / NRRL B-16338 / NBRC 102104 / LLR-40K-21)).